A 483-amino-acid polypeptide reads, in one-letter code: tRNA-2-methylthio-N(6)-dimethylallyladenosine synthase (483 aa).

An MTTase N-terminal domain is found at 31–148 (KKLYIETQGC…LPQMLDQHHA (118 aa)). Cys40, Cys77, Cys111, Cys192, Cys196, and Cys199 together coordinate [4Fe-4S] cluster. The Radical SAM core domain maps to 178–410 (RVEGFKAFVS…QQVIKQSSIE (233 aa)). Positions 413 to 477 (DAMLGKIERV…LNLVYGELLN (65 aa)) constitute a TRAM domain.

It belongs to the methylthiotransferase family. MiaB subfamily. Monomer. The cofactor is [4Fe-4S] cluster.

It localises to the cytoplasm. The catalysed reaction is N(6)-dimethylallyladenosine(37) in tRNA + (sulfur carrier)-SH + AH2 + 2 S-adenosyl-L-methionine = 2-methylsulfanyl-N(6)-dimethylallyladenosine(37) in tRNA + (sulfur carrier)-H + 5'-deoxyadenosine + L-methionine + A + S-adenosyl-L-homocysteine + 2 H(+). Its function is as follows. Catalyzes the methylthiolation of N6-(dimethylallyl)adenosine (i(6)A), leading to the formation of 2-methylthio-N6-(dimethylallyl)adenosine (ms(2)i(6)A) at position 37 in tRNAs that read codons beginning with uridine. This is tRNA-2-methylthio-N(6)-dimethylallyladenosine synthase from Acinetobacter baumannii (strain ACICU).